A 415-amino-acid polypeptide reads, in one-letter code: Serine hydroxymethyltransferase (415 aa).

Residues leucine 117 and 121–123 (GHL) each bind (6S)-5,6,7,8-tetrahydrofolate. N6-(pyridoxal phosphate)lysine is present on lysine 226.

The protein belongs to the SHMT family. Homodimer. Pyridoxal 5'-phosphate serves as cofactor.

It is found in the cytoplasm. It catalyses the reaction (6R)-5,10-methylene-5,6,7,8-tetrahydrofolate + glycine + H2O = (6S)-5,6,7,8-tetrahydrofolate + L-serine. It participates in one-carbon metabolism; tetrahydrofolate interconversion. It functions in the pathway amino-acid biosynthesis; glycine biosynthesis; glycine from L-serine: step 1/1. Its function is as follows. Catalyzes the reversible interconversion of serine and glycine with tetrahydrofolate (THF) serving as the one-carbon carrier. This reaction serves as the major source of one-carbon groups required for the biosynthesis of purines, thymidylate, methionine, and other important biomolecules. Also exhibits THF-independent aldolase activity toward beta-hydroxyamino acids, producing glycine and aldehydes, via a retro-aldol mechanism. The chain is Serine hydroxymethyltransferase from Leptospira borgpetersenii serovar Hardjo-bovis (strain JB197).